The chain runs to 147 residues: UPF0735 ACT domain-containing protein Cthe_1377 (147 aa).

One can recognise an ACT domain in the interval 71–146; the sequence is TLFFTVEDYA…GVKRQEILAR (76 aa).

It belongs to the UPF0735 family.

The protein is UPF0735 ACT domain-containing protein Cthe_1377 of Acetivibrio thermocellus (strain ATCC 27405 / DSM 1237 / JCM 9322 / NBRC 103400 / NCIMB 10682 / NRRL B-4536 / VPI 7372) (Clostridium thermocellum).